The sequence spans 528 residues: Phosphoenolpyruvate carboxykinase (ATP) (528 aa).

3 residues coordinate substrate: Arg56, Tyr192, and Lys198. Residues Lys198, His217, and 233-241 (GLSGTGKTT) contribute to the ATP site. Mn(2+) is bound by residues Lys198 and His217. Asp254 contacts Mn(2+). ATP is bound by residues Glu282, Arg319, and Thr444. Residue Arg319 coordinates substrate.

The protein belongs to the phosphoenolpyruvate carboxykinase (ATP) family. Mn(2+) is required as a cofactor.

It is found in the cytoplasm. It catalyses the reaction oxaloacetate + ATP = phosphoenolpyruvate + ADP + CO2. It functions in the pathway carbohydrate biosynthesis; gluconeogenesis. Functionally, involved in the gluconeogenesis. Catalyzes the conversion of oxaloacetate (OAA) to phosphoenolpyruvate (PEP) through direct phosphoryl transfer between the nucleoside triphosphate and OAA. This Bacillus cereus (strain AH187) protein is Phosphoenolpyruvate carboxykinase (ATP).